Reading from the N-terminus, the 211-residue chain is FMN-dependent NADH:quinone oxidoreductase 2 (211 aa).

17 to 19 contributes to the FMN binding site; the sequence is SYS.

It belongs to the azoreductase type 1 family. As to quaternary structure, homodimer. Requires FMN as cofactor.

The catalysed reaction is 2 a quinone + NADH + H(+) = 2 a 1,4-benzosemiquinone + NAD(+). It carries out the reaction N,N-dimethyl-1,4-phenylenediamine + anthranilate + 2 NAD(+) = 2-(4-dimethylaminophenyl)diazenylbenzoate + 2 NADH + 2 H(+). Its activity is regulated as follows. Strongly inhibited by Pb(2+) and weakly inhibited by Cu(2+), Hg(2+) and Fe(2+). Stable in presence of Ag(+). Its function is as follows. Quinone reductase that provides resistance to thiol-specific stress caused by electrophilic quinones. Contributes to resistance to 2-methylhydroquinone (2-MHQ) and catechol. Exhibits NADH-dependent 2,6-dichloroindophenol (DCIP) oxidoreductase activity. Also exhibits azoreductase activity. Catalyzes the reductive cleavage of the azo bond in aromatic azo compounds to the corresponding amines. Can reduce methyl red. The protein is FMN-dependent NADH:quinone oxidoreductase 2 of Bacillus subtilis (strain 168).